Reading from the N-terminus, the 502-residue chain is MHNGFDALQLHANRLRGVTIPDLLAAELKRPEQYARQVGPLYFNFARQKYDCVALEALFALARNHNVTGAFQRMFCGEQVNVTEGRAVLHTALRGDLSGTSVAVAAYTAAAKVRERMYALIAGLDASEVTDIVSVGIGGSDLGPRLVVDALRPISQGRFRVHFVSNVDGAAMRRTLDMLDPSRTAGILISKTFGTQETLLNGRILYDWLGGSERLYAVSANPERAVHAFDIVPTQVLPIWDWVGGRYSLWSAVGFPIALAIGSQRFEELLAGAAEFDAYALRVPLEENVAVLHGLTAVWNRNFLGCATYAVMAYDQRLALLPAYLQQLVMESLGKRVKCDGTPVDRDTVPVWWGGVGTDVQHSFFQALHQGTNIVPADFIGTIRNDDLYTENHFALNANLLAQIEVLANGQLSDDPHRVYPGGNPSTLILLDALTPQALGGLIAMYEHSVYVQSVIWGINAFDQFGVELGKHLAVQLLPALKGESVEVVDPVTRAVLVRLRG.

Glutamate 331 functions as the Proton donor in the catalytic mechanism. Active-site residues include histidine 362 and lysine 471.

The protein belongs to the GPI family.

The protein localises to the cytoplasm. It carries out the reaction alpha-D-glucose 6-phosphate = beta-D-fructose 6-phosphate. It functions in the pathway carbohydrate biosynthesis; gluconeogenesis. It participates in carbohydrate degradation; glycolysis; D-glyceraldehyde 3-phosphate and glycerone phosphate from D-glucose: step 2/4. Its function is as follows. Catalyzes the reversible isomerization of glucose-6-phosphate to fructose-6-phosphate. In Xylella fastidiosa (strain M12), this protein is Glucose-6-phosphate isomerase.